A 402-amino-acid chain; its full sequence is Arginine biosynthesis bifunctional protein ArgJ (402 aa).

Threonine 149, lysine 175, threonine 186, glutamate 266, asparagine 397, and threonine 402 together coordinate substrate. The active-site Nucleophile is the threonine 186.

The protein belongs to the ArgJ family. Heterotetramer of two alpha and two beta chains.

It localises to the cytoplasm. The enzyme catalyses N(2)-acetyl-L-ornithine + L-glutamate = N-acetyl-L-glutamate + L-ornithine. It catalyses the reaction L-glutamate + acetyl-CoA = N-acetyl-L-glutamate + CoA + H(+). It functions in the pathway amino-acid biosynthesis; L-arginine biosynthesis; L-ornithine and N-acetyl-L-glutamate from L-glutamate and N(2)-acetyl-L-ornithine (cyclic): step 1/1. It participates in amino-acid biosynthesis; L-arginine biosynthesis; N(2)-acetyl-L-ornithine from L-glutamate: step 1/4. In terms of biological role, catalyzes two activities which are involved in the cyclic version of arginine biosynthesis: the synthesis of N-acetylglutamate from glutamate and acetyl-CoA as the acetyl donor, and of ornithine by transacetylation between N(2)-acetylornithine and glutamate. In Prochlorococcus marinus subsp. pastoris (strain CCMP1986 / NIES-2087 / MED4), this protein is Arginine biosynthesis bifunctional protein ArgJ.